The primary structure comprises 157 residues: Small ribosomal subunit protein uS7 (157 aa).

The protein belongs to the universal ribosomal protein uS7 family. In terms of assembly, part of the 30S ribosomal subunit. Contacts proteins S9 and S11.

In terms of biological role, one of the primary rRNA binding proteins, it binds directly to 16S rRNA where it nucleates assembly of the head domain of the 30S subunit. Is located at the subunit interface close to the decoding center, probably blocks exit of the E-site tRNA. The sequence is that of Small ribosomal subunit protein uS7 from Opitutus terrae (strain DSM 11246 / JCM 15787 / PB90-1).